The chain runs to 156 residues: Zinc finger SWIM domain-containing protein 7 homolog (156 aa).

An SWIM-type zinc finger spans residues 82–120; the sequence is YMCLIQGDYCSCPSFNFSVLLKSDSVYCKHQISSILAEI.

It belongs to the SWS1 family.

It is found in the nucleus. May be involved in the homologous recombination repair (HRR) pathway of double-stranded DNA breaks arising during DNA replication or induced by DNA-damaging agents. This chain is Zinc finger SWIM domain-containing protein 7 homolog (zswim7), found in Dictyostelium discoideum (Social amoeba).